The primary structure comprises 571 residues: Phosphomethylpyrimidine synthase (571 aa).

Residues N201, M230, Y259, H295, 315–317, 356–359, and E395 contribute to the substrate site; these read SRG and DALR. Zn(2+) is bound at residue H399. Position 422 (Y422) interacts with substrate. H463 lines the Zn(2+) pocket. [4Fe-4S] cluster is bound by residues C545, C548, and C553.

It belongs to the ThiC family. The cofactor is [4Fe-4S] cluster.

The catalysed reaction is 5-amino-1-(5-phospho-beta-D-ribosyl)imidazole + S-adenosyl-L-methionine = 4-amino-2-methyl-5-(phosphooxymethyl)pyrimidine + CO + 5'-deoxyadenosine + formate + L-methionine + 3 H(+). It participates in cofactor biosynthesis; thiamine diphosphate biosynthesis. Functionally, catalyzes the synthesis of the hydroxymethylpyrimidine phosphate (HMP-P) moiety of thiamine from aminoimidazole ribotide (AIR) in a radical S-adenosyl-L-methionine (SAM)-dependent reaction. This is Phosphomethylpyrimidine synthase from Chlorobium phaeovibrioides (strain DSM 265 / 1930) (Prosthecochloris vibrioformis (strain DSM 265)).